A 78-amino-acid chain; its full sequence is MARVCVVTGKKPMVGNNVSHANNKTKRRFLPNLQYRRFWVESENRWVRLRLSNAALRTIDKNGIESVLADLRARGEAV.

Belongs to the bacterial ribosomal protein bL28 family.

The protein is Large ribosomal subunit protein bL28 of Thiobacillus denitrificans (strain ATCC 25259 / T1).